The primary structure comprises 358 residues: DNA polymerase IV (358 aa).

In terms of domain architecture, UmuC spans 4 to 185; the sequence is IIHIDMDCYF…LSLRKIPGVG (182 aa). Residues aspartate 8 and aspartate 103 each coordinate Mg(2+). Glutamate 104 is an active-site residue.

It belongs to the DNA polymerase type-Y family. As to quaternary structure, monomer. Mg(2+) serves as cofactor.

The protein localises to the cytoplasm. It catalyses the reaction DNA(n) + a 2'-deoxyribonucleoside 5'-triphosphate = DNA(n+1) + diphosphate. Poorly processive, error-prone DNA polymerase involved in untargeted mutagenesis. Copies undamaged DNA at stalled replication forks, which arise in vivo from mismatched or misaligned primer ends. These misaligned primers can be extended by PolIV. Exhibits no 3'-5' exonuclease (proofreading) activity. May be involved in translesional synthesis, in conjunction with the beta clamp from PolIII. The sequence is that of DNA polymerase IV from Shewanella baltica (strain OS155 / ATCC BAA-1091).